Here is a 206-residue protein sequence, read N- to C-terminus: GTP cyclohydrolase 1 (206 aa).

Residues Cys95, His98, and Cys166 each contribute to the Zn(2+) site.

It belongs to the GTP cyclohydrolase I family. Toroid-shaped homodecamer, composed of two pentamers of five dimers.

The enzyme catalyses GTP + H2O = 7,8-dihydroneopterin 3'-triphosphate + formate + H(+). Its pathway is cofactor biosynthesis; 7,8-dihydroneopterin triphosphate biosynthesis; 7,8-dihydroneopterin triphosphate from GTP: step 1/1. The polypeptide is GTP cyclohydrolase 1 (Bartonella henselae (strain ATCC 49882 / DSM 28221 / CCUG 30454 / Houston 1) (Rochalimaea henselae)).